Reading from the N-terminus, the 158-residue chain is NAD(P)H-quinone oxidoreductase subunit J, chloroplastic (158 aa).

It belongs to the complex I 30 kDa subunit family. As to quaternary structure, NDH is composed of at least 16 different subunits, 5 of which are encoded in the nucleus.

The protein resides in the plastid. It localises to the chloroplast thylakoid membrane. The catalysed reaction is a plastoquinone + NADH + (n+1) H(+)(in) = a plastoquinol + NAD(+) + n H(+)(out). It catalyses the reaction a plastoquinone + NADPH + (n+1) H(+)(in) = a plastoquinol + NADP(+) + n H(+)(out). In terms of biological role, NDH shuttles electrons from NAD(P)H:plastoquinone, via FMN and iron-sulfur (Fe-S) centers, to quinones in the photosynthetic chain and possibly in a chloroplast respiratory chain. The immediate electron acceptor for the enzyme in this species is believed to be plastoquinone. Couples the redox reaction to proton translocation, and thus conserves the redox energy in a proton gradient. This Daucus carota (Wild carrot) protein is NAD(P)H-quinone oxidoreductase subunit J, chloroplastic.